The sequence spans 1141 residues: MINRDNKKAITKKGMISNRLNKFSIRKYTVGTASILVGTTLIFGLGNQEAKAAENTSTENAKQDDATTSDNKEVVSEAENNSTTENDSTNPIKKETNTDSQPEAKEESTKSSTQQQQNNVTATTETKPQNIEKENVKPSTDKTATEDTSVILEEKKAPNNTNNDVTTKPSTSEIQTKPTTPQESTNIENSQPQPTPSKVDNQVTDATNPKEPVNVSKEELKNNPEKLKELVRNDSNTDHSTKPVATAPTSVAPKRVNAKMRFAVAQPAAVASNNVNDLIKVTKQTIKVGDGKDNVAAAHDGKDIEYDTEFTIDNKVKKGDTMTINYDKNVIPSDLTDKNDPIDITDPSGEVIAKGTFDKATKQITYTFTDYVDKYEDIKSRLTLYSYIDKKTVPNETSLNLTFATAGKETSQNVTVDYQDPMVHGDSNIQSIFTKLDEDKQTIEQQIYVNPLKKSATNTKVDIAGSQVDDYGNIKLGNGSTIIDQNTEIKVYKVNSDQQLPQSNRIYDFSQYEDVTSQFDNKKSFSNNVATLDFGDINSAYIIKVVSKYTPTSDGELDIAQGTSMRTTDKYGYYNYAGYSNFIVTSNDSGGGDGTVKPEEKLYKIGDYVWEDVDKDGVQGTDSKEKPMANVLVTLTYPDGTTKSVRTDAKGHYEFGGLKDGETYTVKFETPTGYLPTKVNGTTDGEKDSNGSSVTVKINGKDDMSLDTGFYKEPKYNLGDYVWEDTNKDGIQDANEPGIKDVKVTLKDSTGKVIGTTTTDASGKYKFTDLDNGNYTVEFETPAGYTPTVKNTTAEDKDSNGLTTTGVIKDADNMTLDSGFYKTPKYSLGDYVWYDSNKDGKQDSTEKGIKDVTVTLQNEKGEVIGTTKTDENGKYRFDNLDSGKYKVIFEKPAGLTQTVTNTTEDDKDADGGEVDVTITDHDDFTLDNGYFEEDTSDSDSDSDSDSDSDSDSDSDSDSDSDSDSDSESDSDSDSDSDSDSDSDSDSDSDSDSDSDSDSDSDSDSDSDSDSDSDSDSDSDSDSDSDSDSDSDSDSDSDSDSDSDSDSDSDSDSDSDSDSDSDSDSDSDSDSDSDSDSDSDSDAGKHTPVKPMSTTKDHHNKAKALPETGSENNGSNNATLFGGLFAALGSLLLFGRRKKQNK.

The N-terminal stretch at 1 to 52 (MINRDNKKAITKKGMISNRLNKFSIRKYTVGTASILVGTTLIFGLGNQEAKA) is a signal peptide. A YSIRK-G/S signaling motif motif is present at residues 23-34 (FSIRKYTVGTAS). The tract at residues 53–601 (AENTSTENAK…GDGTVKPEEK (549 aa)) is ligand binding A region. The disordered stretch occupies residues 54-225 (ENTSTENAKQ…SKEELKNNPE (172 aa)). Residues 61–75 (AKQDDATTSDNKEVV) are compositionally biased toward basic and acidic residues. Residues 77 to 90 (EAENNSTTENDSTN) show a composition bias toward low complexity. Over residues 92-109 (IKKETNTDSQPEAKEEST) the composition is skewed to basic and acidic residues. The span at 110-126 (KSSTQQQQNNVTATTET) shows a compositional bias: low complexity. Positions 130–145 (NIEKENVKPSTDKTAT) are enriched in basic and acidic residues. The span at 158 to 207 (PNNTNNDVTTKPSTSEIQTKPTTPQESTNIENSQPQPTPSKVDNQVTDAT) shows a compositional bias: polar residues. Basic and acidic residues predominate over residues 216-225 (SKEELKNNPE). CNA-B domains lie at 602–714 (LYKI…YKEP), 715–824 (KYNL…YKTP), and 825–935 (KYSL…EEDT). The disordered stretch occupies residues 899-1117 (VTNTTEDDKD…GSENNGSNNA (219 aa)). 2 stretches are compositionally biased toward acidic residues: residues 903-913 (TEDDKDADGGE) and 930-1080 (YFEE…DSDS). An LPXTG sorting signal motif is present at residues 1104 to 1108 (LPETG). Threonine 1107 is modified (pentaglycyl murein peptidoglycan amidated threonine). Residues 1108–1141 (GSENNGSNNATLFGGLFAALGSLLLFGRRKKQNK) constitute a propeptide, removed by sortase.

This sequence belongs to the serine-aspartate repeat-containing protein (SDr) family. In terms of assembly, interacts with host complement factor H/CFAH (via C-terminus). Interacts with host complement regulator C4BPA.

The protein resides in the secreted. Its subcellular location is the cell wall. Functionally, cell surface-associated calcium-binding protein which plays an important role in adhesion and pathogenesis. Contributes to the resistance to killing by innate immune components in blood and thus attenuates bacterial clearance by interacting with host complement factor H/CFAH and modulating its activity. Also inhibits bacterial opsonization and killing by interacting with host complement regulator C4BPA and thus inhibiting classical complement pathway activation. The chain is Serine-aspartate repeat-containing protein E (sdrE) from Staphylococcus aureus (strain MSSA476).